A 164-amino-acid polypeptide reads, in one-letter code: Outer membrane protein assembly factor BamE (164 aa).

Residues 1–19 form the signal peptide; that stretch reads MHAFFPRLLLLLLFLPLTH. Residues 111–164 are disordered; sequence PAFSESEPAQNFFSPEQTFTPAPDTDSNMNEEPDKKGTVNFLKENQTNFYKDNQ. Polar residues-rich tracts occupy residues 117–140 and 153–164; these read EPAQNFFSPEQTFTPAPDTDSNMN and KENQTNFYKDNQ.

This sequence belongs to the BamE family. In terms of assembly, part of the Bam complex.

It is found in the cell outer membrane. Its function is as follows. Part of the outer membrane protein assembly complex, which is involved in assembly and insertion of beta-barrel proteins into the outer membrane. In Nitrosomonas europaea (strain ATCC 19718 / CIP 103999 / KCTC 2705 / NBRC 14298), this protein is Outer membrane protein assembly factor BamE.